The primary structure comprises 136 residues: Protein NrdI (136 aa).

Belongs to the NrdI family.

Functionally, probably involved in ribonucleotide reductase function. The sequence is that of Protein NrdI from Shigella dysenteriae serotype 1 (strain Sd197).